Reading from the N-terminus, the 344-residue chain is Uroporphyrinogen decarboxylase (344 aa).

Residues 25–29 (RQAGR), Asp75, Tyr152, Ser207, and His323 each bind substrate.

This sequence belongs to the uroporphyrinogen decarboxylase family. As to quaternary structure, homodimer.

Its subcellular location is the cytoplasm. The enzyme catalyses uroporphyrinogen III + 4 H(+) = coproporphyrinogen III + 4 CO2. Its pathway is porphyrin-containing compound metabolism; protoporphyrin-IX biosynthesis; coproporphyrinogen-III from 5-aminolevulinate: step 4/4. Catalyzes the decarboxylation of four acetate groups of uroporphyrinogen-III to yield coproporphyrinogen-III. The sequence is that of Uroporphyrinogen decarboxylase from Ruegeria pomeroyi (strain ATCC 700808 / DSM 15171 / DSS-3) (Silicibacter pomeroyi).